A 534-amino-acid polypeptide reads, in one-letter code: Bifunctional purine biosynthesis protein PurH (534 aa).

The MGS-like domain maps to 6–151 (TRLPIRRALI…KNHKDVAIVV (146 aa)).

It belongs to the PurH family.

The enzyme catalyses (6R)-10-formyltetrahydrofolate + 5-amino-1-(5-phospho-beta-D-ribosyl)imidazole-4-carboxamide = 5-formamido-1-(5-phospho-D-ribosyl)imidazole-4-carboxamide + (6S)-5,6,7,8-tetrahydrofolate. The catalysed reaction is IMP + H2O = 5-formamido-1-(5-phospho-D-ribosyl)imidazole-4-carboxamide. It participates in purine metabolism; IMP biosynthesis via de novo pathway; 5-formamido-1-(5-phospho-D-ribosyl)imidazole-4-carboxamide from 5-amino-1-(5-phospho-D-ribosyl)imidazole-4-carboxamide (10-formyl THF route): step 1/1. Its pathway is purine metabolism; IMP biosynthesis via de novo pathway; IMP from 5-formamido-1-(5-phospho-D-ribosyl)imidazole-4-carboxamide: step 1/1. This chain is Bifunctional purine biosynthesis protein PurH, found in Pseudomonas syringae pv. tomato (strain ATCC BAA-871 / DC3000).